We begin with the raw amino-acid sequence, 953 residues long: Coatomer subunit beta (953 aa).

N-acetylthreonine is present on T2. HEAT repeat units follow at residues 96-131 (HEMI…KEAE), 132-168 (LLEP…NFEH), 240-276 (SERA…SAPT), 277-314 (AIKA…HPAH), 316-353 (RVLQ…SRNV), and 396-433 (DMAA…RFDN). At K494 the chain carries N6-acetyllysine.

In terms of assembly, oligomeric complex that consists of at least the alpha, beta, beta', gamma, delta, epsilon and zeta subunits. Interacts with CAPN8 and PRKCE. Interacts with SCYL1. Interacts with COPG1. Interacts with ARF1 (myristoylated); this interaction is required for binding of COPB1 to Golgi membranes. Interacts (via trunk domain) with ARF1 (via switch I region); the interaction is direct. Interacts with KCNK2 (via N-terminus); this interaction increases the channel-mediated whole cell currents and promotes plasma membrane expression of KCNK2. Interacts with STX17. Interacts with TMEM115. Interacts with TMEM41B. High expression in the lung, kidney, skeletal muscle and small intestine, and lower level of expression in heart, liver, spleen, stomach and fat.

It is found in the cytoplasm. It localises to the golgi apparatus membrane. Its subcellular location is the cytoplasmic vesicle. The protein resides in the COPI-coated vesicle membrane. The protein localises to the cell membrane. It is found in the endoplasmic reticulum-Golgi intermediate compartment. Functionally, the coatomer is a cytosolic protein complex that binds to dilysine motifs and reversibly associates with Golgi non-clathrin-coated vesicles, which further mediate biosynthetic protein transport from the ER, via the Golgi up to the trans Golgi network. Coatomer complex is required for budding from Golgi membranes, and is essential for the retrograde Golgi-to-ER transport of dilysine-tagged proteins. In mammals, the coatomer can only be recruited by membranes associated to ADP-ribosylation factors (ARFs), which are small GTP-binding proteins; the complex also influences the Golgi structural integrity, as well as the processing, activity, and endocytic recycling of LDL receptors. Plays a functional role in facilitating the transport of kappa-type opioid receptor mRNAs into axons and enhances translation of these proteins. Required for limiting lipid storage in lipid droplets. Involved in lipid homeostasis by regulating the presence of perilipin family members PLIN2 and PLIN3 at the lipid droplet surface and promoting the association of adipocyte surface triglyceride lipase (PNPLA2) with the lipid droplet to mediate lipolysis. Involved in the Golgi disassembly and reassembly processes during cell cycle. Involved in autophagy by playing a role in early endosome function. Plays a role in organellar compartmentalization of secretory compartments including endoplasmic reticulum (ER)-Golgi intermediate compartment (ERGIC), Golgi, trans-Golgi network (TGN) and recycling endosomes, and in biosynthetic transport of CAV1. The protein is Coatomer subunit beta of Sus scrofa (Pig).